We begin with the raw amino-acid sequence, 133 residues long: MADKLHFDLVSPERRLFAGNVDQVVVPGEEGDFGVLPNHAPFMSVIRPGAITVIDDGKETRTFIHGGFAEVTAAGLTILAEEAIAVADIDTEKLARDLSDAREDVTAAKDEEERDQAAALVAKYEAMQAVAAH.

It belongs to the ATPase epsilon chain family. As to quaternary structure, F-type ATPases have 2 components, CF(1) - the catalytic core - and CF(0) - the membrane proton channel. CF(1) has five subunits: alpha(3), beta(3), gamma(1), delta(1), epsilon(1). CF(0) has three main subunits: a, b and c.

It localises to the cell inner membrane. In terms of biological role, produces ATP from ADP in the presence of a proton gradient across the membrane. This Maricaulis maris (strain MCS10) (Caulobacter maris) protein is ATP synthase epsilon chain.